Here is a 103-residue protein sequence, read N- to C-terminus: Large ribosomal subunit protein bL21 (103 aa).

Belongs to the bacterial ribosomal protein bL21 family. Part of the 50S ribosomal subunit. Contacts protein L20.

In terms of biological role, this protein binds to 23S rRNA in the presence of protein L20. The protein is Large ribosomal subunit protein bL21 of Saccharophagus degradans (strain 2-40 / ATCC 43961 / DSM 17024).